Consider the following 476-residue polypeptide: Glutamate--tRNA ligase (476 aa).

Positions 9–19 (PSPTGKLHIGT) match the 'HIGH' region motif. Basic and acidic residues predominate over residues 109–129 (REEQKSRNKPPRYDNRHRSLS). The interval 109–133 (REEQKSRNKPPRYDNRHRSLSTEEE) is disordered. The short motif at 248–252 (KLSKR) is the 'KMSKS' region element. Residue Lys-251 coordinates ATP.

Belongs to the class-I aminoacyl-tRNA synthetase family. Glutamate--tRNA ligase type 1 subfamily. As to quaternary structure, monomer.

The protein resides in the cytoplasm. The catalysed reaction is tRNA(Glu) + L-glutamate + ATP = L-glutamyl-tRNA(Glu) + AMP + diphosphate. Catalyzes the attachment of glutamate to tRNA(Glu) in a two-step reaction: glutamate is first activated by ATP to form Glu-AMP and then transferred to the acceptor end of tRNA(Glu). This is Glutamate--tRNA ligase from Prochlorococcus marinus (strain MIT 9211).